Consider the following 3326-residue polypeptide: Deoxyribonuclease CdiA (3326 aa).

A two-partner system transport domain (TPS) region spans residues 36–342 (TADGVLTSGG…ARGALTLTGS (307 aa)). Residues 343–1396 (YAGAGSLYSD…ITVRTGTLTN (1054 aa)) form an FHA-1 region. A receptor binding domain (RBD) region spans residues 1397-1765 (QREGLVVTES…QQLGSPSLTD (369 aa)). Positions 1766 to 1951 (YPLPTSQSGL…LAQADKTNLQ (186 aa)) are YP domain. Residues 1959 to 2097 (SVSLSAGGDI…AGGPLQLAAG (139 aa)) are periplasmic FHA-1 repeat (pFR). An FHA-2 region spans residues 2125 to 2660 (QGLVQSTVAS…SNRYDSKQTS (536 aa)). A VENN CT cleavage motif motif is present at residues 3060-3063 (VENN). The interval 3060 to 3326 (VENNSLGDIA…DRNRQIGVIK (267 aa)) is CT domain.

The protein in the N-terminal section; belongs to the CdiA toxin family. The C-terminal (CT) domain interacts with cognate CdiI but not non-cognate CdiI from E.coli strain 536 / UPEC.

The protein localises to the target cell. It localises to the target cell cytoplasm. Functionally, toxic component of a toxin-immunity protein module, which functions as a cellular contact-dependent growth inhibition (CDI) system. CDI modules allow bacteria to communicate with and inhibit the growth of closely related neighboring bacteria in a contact-dependent fashion. CDI is neutralized by its cognate immunity protein CdiI, but not by non-cognate CdiI from other bacteria. The C-terminal domain (CT) has strong DNase activity; this activity is inhibited by cognate CdiI. Its function is as follows. The CdiA protein is thought to be exported from the cell through the central lumen of CdiB, the other half of its two-partner system (TPS). The TPS domain probably remains associated with CdiB while the FHA-1 domain forms an extended filament with the receptor-binding domain (RBD) at its extremity; in the secretion arrested state the C-terminus of the RBD and YP domains form a hairpin-like structure as the FHA-2, PT and CT domains are periplasmic. The YP domain is probably responsible for this arrest at the point where it re-enters the host cell periplasm. Upon binding to a target cell outer membrane receptor a signal is transmitted to activate secretion. The filament elongates slightly, the rest of CdiA is secreted and the FHA-2 domain becomes stably associated with the target cell's outer membrane where it facilitates entry of the toxic CT domain into the target cell periplasm. From there the toxic CT domain is cleaved and gains access to the target cell cytoplasm via an inner membrane protein. In Dickeya dadantii (strain 3937) (Erwinia chrysanthemi (strain 3937)), this protein is Deoxyribonuclease CdiA.